We begin with the raw amino-acid sequence, 381 residues long: Ceramide-binding protein svf-1 (381 aa).

The interval 1-18 is peripherally associates with membranes; the sequence is MFKWAQAALANVAGTKEP.

Belongs to the SVF1 family.

The protein localises to the golgi apparatus. Its subcellular location is the cis-Golgi network membrane. It is found in the endoplasmic reticulum membrane. The protein resides in the cytoplasm. It localises to the nucleus. Functionally, ceramide-binding protein that may transfer ceramides from the endoplasmic reticulum membrane to the cis-Golgi network membrane, and is thereby required for the biosynthesis of complex sphingolipids. This chain is Ceramide-binding protein svf-1 (svf-1), found in Neurospora crassa (strain ATCC 24698 / 74-OR23-1A / CBS 708.71 / DSM 1257 / FGSC 987).